An 887-amino-acid polypeptide reads, in one-letter code: DNA mismatch repair protein MutS (887 aa).

602–609 (GPNMSGKS) lines the ATP pocket.

Belongs to the DNA mismatch repair MutS family.

In terms of biological role, this protein is involved in the repair of mismatches in DNA. It is possible that it carries out the mismatch recognition step. This protein has a weak ATPase activity. The polypeptide is DNA mismatch repair protein MutS (Staphylococcus saprophyticus subsp. saprophyticus (strain ATCC 15305 / DSM 20229 / NCIMB 8711 / NCTC 7292 / S-41)).